The following is a 489-amino-acid chain: Mitochondrial-processing peptidase subunit beta (489 aa).

Residues 1–45 (MAAAALSRTLLPEARRRLWGFTRRLPLRRAAAQPLYFGGDRLRST) constitute a mitochondrion transit peptide. Position 101 (H101) interacts with Zn(2+). Residue E104 is the Proton acceptor of the active site. Zn(2+) contacts are provided by H105 and E181.

Belongs to the peptidase M16 family. Heterodimer of PMPCA (alpha) and PMPCB (beta) subunits, forming the mitochondrial processing protease (MPP) in which PMPCA is involved in substrate recognition and binding and PMPCB is the catalytic subunit. Requires Zn(2+) as cofactor.

It is found in the mitochondrion matrix. The enzyme catalyses Release of N-terminal transit peptides from precursor proteins imported into the mitochondrion, typically with Arg in position P2.. With respect to regulation, binding to PMPCA is required for catalytic activity. Its function is as follows. Catalytic subunit of the essential mitochondrial processing protease (MPP), which cleaves the mitochondrial sequence off newly imported precursors proteins. Preferentially, cleaves after an arginine at position P2. Required for PINK1 turnover by coupling PINK1 mitochondrial import and cleavage, which results in subsequent PINK1 proteolysis. The sequence is that of Mitochondrial-processing peptidase subunit beta (Pmpcb) from Mus musculus (Mouse).